Consider the following 457-residue polypeptide: Putative hexose transporter 12 (457 aa).

At 1-2 (MG) the chain is on the cytoplasmic side. Residues 3–23 (LIVSIFNIGCAIGGIVLSKVG) form a helical membrane-spanning segment. Topologically, residues 24–29 (DIYGRR) are extracellular. A helical membrane pass occupies residues 30–50 (IGLITVTAIYVVGILIQITSI). The Cytoplasmic segment spans residues 51 to 60 (NKWYQYFIGR). The chain crosses the membrane as a helical span at residues 61 to 81 (IISGIGVGGIAVLSPMLISEV). Over 82–87 (APKHIR) the chain is Extracellular. A helical membrane pass occupies residues 88–108 (GTLVQLYQLMGTMGIFLGYCT). Topologically, residues 109-122 (NYGTKNYHNATQWR) are cytoplasmic. A helical transmembrane segment spans residues 123–143 (VGLGLCFAWATFMVSGMMFVP). Residues 144 to 247 (ESPRYLIEVG…KSVGLKDSFQ (104 aa)) are Extracellular-facing. An N-linked (GlcNAc...) asparagine glycan is attached at asparagine 194. A helical transmembrane segment spans residues 248–268 (TSIIIGVVNFFSSFIAVYTIE). At 269-274 (RFGRRT) the chain is on the cytoplasmic side. The helical transmembrane segment at 275–295 (CLLWGAASMLCCFAVFASVGV) threads the bilayer. At 296–319 (TKLWPQGSSHQDITSQGAGNCMIV) the chain is on the extracellular side. Residues 320-340 (FTMFFIFSFATTWAGGCFVIV) traverse the membrane as a helical segment. Residues 341–353 (SETFPLRAKSRGM) lie on the Cytoplasmic side of the membrane. The helical transmembrane segment at 354-374 (AIATAANWMWGFLISFFTPFI) threads the bilayer. Over 375–379 (TGAIN) the chain is Extracellular. Residues 380 to 400 (FYYGYVFLGCLVFAYFYVFFF) form a helical membrane-spanning segment. Topologically, residues 401–457 (VPETKGLTLEEVNTMWLEGVPAWKSASWVPPERRTADYDADAIDHDNRPIYKRFFSS) are cytoplasmic.

The protein belongs to the major facilitator superfamily. Sugar transporter (TC 2.A.1.1) family.

It localises to the membrane. Functionally, probable glucose transporter. This chain is Putative hexose transporter 12 (HXT12), found in Saccharomyces cerevisiae (strain ATCC 204508 / S288c) (Baker's yeast).